We begin with the raw amino-acid sequence, 165 residues long: Peptide methionine sulfoxide reductase MsrA (165 aa).

The active site involves Cys-11.

Belongs to the MsrA Met sulfoxide reductase family.

It carries out the reaction L-methionyl-[protein] + [thioredoxin]-disulfide + H2O = L-methionyl-(S)-S-oxide-[protein] + [thioredoxin]-dithiol. The enzyme catalyses [thioredoxin]-disulfide + L-methionine + H2O = L-methionine (S)-S-oxide + [thioredoxin]-dithiol. In terms of biological role, has an important function as a repair enzyme for proteins that have been inactivated by oxidation. Catalyzes the reversible oxidation-reduction of methionine sulfoxide in proteins to methionine. In Ureaplasma urealyticum serovar 10 (strain ATCC 33699 / Western), this protein is Peptide methionine sulfoxide reductase MsrA.